A 437-amino-acid chain; its full sequence is Trigger factor (437 aa).

One can recognise a PPIase FKBP-type domain in the interval 163–248 (SDRVIIDFEG…LNNVSEATLP (86 aa)).

The protein belongs to the FKBP-type PPIase family. Tig subfamily.

It is found in the cytoplasm. It carries out the reaction [protein]-peptidylproline (omega=180) = [protein]-peptidylproline (omega=0). Its function is as follows. Involved in protein export. Acts as a chaperone by maintaining the newly synthesized protein in an open conformation. Functions as a peptidyl-prolyl cis-trans isomerase. The sequence is that of Trigger factor from Neisseria meningitidis serogroup C / serotype 2a (strain ATCC 700532 / DSM 15464 / FAM18).